The primary structure comprises 85 residues: Large ribosomal subunit protein eL43 (85 aa).

Residues cysteine 32, cysteine 35, cysteine 50, and cysteine 53 each contribute to the Zn(2+) site. The segment at cysteine 32–cysteine 53 adopts a C4-type zinc-finger fold.

The protein belongs to the eukaryotic ribosomal protein eL43 family. As to quaternary structure, component of the large ribosomal subunit.

Its subcellular location is the cytoplasm. Functionally, component of the large ribosomal subunit. The ribosome is a large ribonucleoprotein complex responsible for the synthesis of proteins in the cell. The sequence is that of Large ribosomal subunit protein eL43 (rpl37a) from Myxine glutinosa (Atlantic hagfish).